A 253-amino-acid polypeptide reads, in one-letter code: Pimeloyl-[acyl-carrier protein] methyl ester esterase (253 aa).

Residues Trp18, 78–79, and 139–143 contribute to the substrate site; these read SL and FLALD. The active-site Nucleophile is Ser78. Residues Asp203 and His231 contribute to the active site. His231 is a binding site for substrate.

This sequence belongs to the AB hydrolase superfamily. Carboxylesterase BioH family. In terms of assembly, monomer.

It localises to the cytoplasm. It carries out the reaction 6-carboxyhexanoyl-[ACP] methyl ester + H2O = 6-carboxyhexanoyl-[ACP] + methanol + H(+). The protein operates within cofactor biosynthesis; biotin biosynthesis. In terms of biological role, the physiological role of BioH is to remove the methyl group introduced by BioC when the pimeloyl moiety is complete. It allows to synthesize pimeloyl-ACP via the fatty acid synthetic pathway through the hydrolysis of the ester bonds of pimeloyl-ACP esters. This Xanthomonas campestris pv. campestris (strain 8004) protein is Pimeloyl-[acyl-carrier protein] methyl ester esterase.